We begin with the raw amino-acid sequence, 304 residues long: Signal recognition particle receptor FtsY (304 aa).

GTP contacts are provided by residues 109-116 (GVNGVGKT), 191-195 (DTAGR), and 255-258 (TKLD).

It belongs to the GTP-binding SRP family. FtsY subfamily. In terms of assembly, part of the signal recognition particle protein translocation system, which is composed of SRP and FtsY. In terms of processing, sensitive to endogenous proteolytic cleavage between residues 18 and 19 and between residues 86 and 87.

The protein resides in the cell membrane. It is found in the cytoplasm. The enzyme catalyses GTP + H2O = GDP + phosphate + H(+). Involved in targeting and insertion of nascent membrane proteins into the cytoplasmic membrane. Acts as a receptor for the complex formed by the signal recognition particle (SRP) and the ribosome-nascent chain (RNC). This Thermus aquaticus protein is Signal recognition particle receptor FtsY.